The sequence spans 215 residues: MKYELTATEARVIGCLLEKQVTTPEQYPLSVNGVVTACNQKTNREPVMNLTEQEVQEQLDNLVKRHFLRTVSGFGNRVTKYEQRFCNSEFGDLKLSAAEVALVTTLLLRGAQTPGELRSRASRMHEFSDMAEVESTLERLASREDGPYVVRLAREPGKRESRYIHLFCGDVDELSLQTSAPESASGDLQSRVEALESEVAELKQRLDSLLAHLGE.

It belongs to the UPF0502 family.

The protein is UPF0502 protein YceH of Salmonella paratyphi A (strain ATCC 9150 / SARB42).